Reading from the N-terminus, the 213-residue chain is MSQISITSPKHCAKKGGININNRHKKLFFTFSTFFSGLLLIIFLVWLILHPERPEFSLTEADIYSLNLTTSSTHLLNSSVQLTLFSKNPNKKVGIYYDKLLVYAAYRGQQITSEASLPPFYQSHEEINLLTAFLQGTELPVAQSFGYQISRERSTGKIIIGMKMDGKLRWKIGTWVSGAYRFNVNCLAIVAFGMNMTTPPLASLQGTRCSTTI.

Residues 1–27 (MSQISITSPKHCAKKGGININNRHKKL) are Cytoplasmic-facing. A helical membrane pass occupies residues 28–48 (FFTFSTFFSGLLLIIFLVWLI). Residues 49–213 (LHPERPEFSL…LQGTRCSTTI (165 aa)) are Lumenal-facing. Asn-67, Asn-77, and Asn-195 each carry an N-linked (GlcNAc...) asparagine glycan.

In terms of tissue distribution, expressed in the vasculature of roots, rosette leaves, stems, cauline leaves and flowers. Specifically expressed in phloem.

The protein resides in the cell junction. Its subcellular location is the plasmodesma. The protein localises to the endoplasmic reticulum membrane. Involved in the regulation of sugar, amino acid and some primary metabolite export from companion cells (CCs) to sieve elements (SEs) in phloem. Required for apoplastic phloem sugar loading in source leaves in order to transport it to sink tissues. Required for correct sugar partitioning between source leaves and sink organs. The polypeptide is NDR1/HIN1-like protein 26 (Arabidopsis thaliana (Mouse-ear cress)).